The primary structure comprises 257 residues: NAD-capped RNA hydrolase NudC (257 aa).

Arg-69 contributes to the substrate binding site. Positions 98 and 101 each coordinate Zn(2+). Position 111 (Glu-111) interacts with substrate. Zn(2+) contacts are provided by Cys-116 and Cys-119. A substrate-binding site is contributed by Tyr-124. One can recognise a Nudix hydrolase domain in the interval 125–248 (PQIAPCIIVA…TVARRLIEDT (124 aa)). Positions 158, 174, and 178 each coordinate a divalent metal cation. The short motif at 159 to 180 (GFVEVGETLEQAVAREVMEESG) is the Nudix box element. A substrate-binding site is contributed by 192–199 (QPWPFPQS). Glu-219 provides a ligand contact to a divalent metal cation. Residue Ala-241 coordinates substrate.

The protein belongs to the Nudix hydrolase family. NudC subfamily. As to quaternary structure, homodimer. It depends on Mg(2+) as a cofactor. The cofactor is Mn(2+). Requires Zn(2+) as cofactor.

The catalysed reaction is a 5'-end NAD(+)-phospho-ribonucleoside in mRNA + H2O = a 5'-end phospho-adenosine-phospho-ribonucleoside in mRNA + beta-nicotinamide D-ribonucleotide + 2 H(+). It carries out the reaction NAD(+) + H2O = beta-nicotinamide D-ribonucleotide + AMP + 2 H(+). The enzyme catalyses NADH + H2O = reduced beta-nicotinamide D-ribonucleotide + AMP + 2 H(+). MRNA decapping enzyme that specifically removes the nicotinamide adenine dinucleotide (NAD) cap from a subset of mRNAs by hydrolyzing the diphosphate linkage to produce nicotinamide mononucleotide (NMN) and 5' monophosphate mRNA. The NAD-cap is present at the 5'-end of some mRNAs and stabilizes RNA against 5'-processing. Has preference for mRNAs with a 5'-end purine. Catalyzes the hydrolysis of a broad range of dinucleotide pyrophosphates. In Salmonella heidelberg (strain SL476), this protein is NAD-capped RNA hydrolase NudC.